Consider the following 797-residue polypeptide: G-type lectin S-receptor-like serine/threonine-protein kinase SD2-2 (797 aa).

The signal sequence occupies residues 1 to 23; that stretch reads MPCTTYLPLLLLLFLLPPPSVQS. A Bulb-type lectin domain is found at 24–139; that stretch reads KVIIKGNQTI…DGSPVWQSFD (116 aa). The Extracellular portion of the chain corresponds to 24–401; the sequence is KVIIKGNQTI…KNSKGNISKS (378 aa). N-linked (GlcNAc...) asparagine glycosylation is found at Asn30, Asn49, Asn150, and Asn197. The EGF-like; atypical domain maps to 274-310; the sequence is PEDPCRVYNLCGQLGFCSSELLKPCACIRGFRPRNDA. 4 disulfide bridges follow: Cys278-Cys290, Cys284-Cys298, Cys359-Cys381, and Cys363-Cys369. The 87-residue stretch at 321–407 folds into the PAN domain; it reads CRRENGDSGE…ISKSIIILCS (87 aa). Asn366 and Asn397 each carry an N-linked (GlcNAc...) asparagine glycan. A helical membrane pass occupies residues 402-422; that stretch reads IIILCSVVGSISVLGFTLLVP. The Cytoplasmic portion of the chain corresponds to 423-797; sequence LILLKRSRKR…SRSSFGRPSP (375 aa). Residues 461–742 form the Protein kinase domain; sequence NGFSDKVGHG…TVVKMLEGVV (282 aa). ATP contacts are provided by residues 467–475 and Lys490; that span reads VGHGGFGAV. The caM-binding stretch occupies residues 550-566; the sequence is SPKLLSWETRFRIALGT. Catalysis depends on Asp585, which acts as the Proton acceptor. Residues 767–797 are disordered; the sequence is GTSCSEGHGCSDLNTGLSSPGSRSSFGRPSP. A compositionally biased stretch (low complexity) spans 784–797; the sequence is SSPGSRSSFGRPSP.

It belongs to the protein kinase superfamily. Ser/Thr protein kinase family. In terms of processing, autophosphorylated. Expressed in the shoot apex and roots, specifically in lateral roots and at the root-hypocotyl transition zone.

The protein resides in the cell membrane. It carries out the reaction L-seryl-[protein] + ATP = O-phospho-L-seryl-[protein] + ADP + H(+). It catalyses the reaction L-threonyl-[protein] + ATP = O-phospho-L-threonyl-[protein] + ADP + H(+). Its function is as follows. Serine/threonine-protein kinase. This is G-type lectin S-receptor-like serine/threonine-protein kinase SD2-2 (SD22) from Arabidopsis thaliana (Mouse-ear cress).